Here is a 166-residue protein sequence, read N- to C-terminus: Large ribosomal subunit protein uL10 (166 aa).

Belongs to the universal ribosomal protein uL10 family. Part of the ribosomal stalk of the 50S ribosomal subunit. The N-terminus interacts with L11 and the large rRNA to form the base of the stalk. The C-terminus forms an elongated spine to which L12 dimers bind in a sequential fashion forming a multimeric L10(L12)X complex.

Functionally, forms part of the ribosomal stalk, playing a central role in the interaction of the ribosome with GTP-bound translation factors. In Ureaplasma parvum serovar 3 (strain ATCC 27815 / 27 / NCTC 11736), this protein is Large ribosomal subunit protein uL10.